Here is an 85-residue protein sequence, read N- to C-terminus: Conotoxin Im28.1 (85 aa).

A signal peptide spans 1 to 21; it reads MPKLEMMLLVLLILPLCYIDA. Positions 22-40 are excised as a propeptide; that stretch reads VGPPPPWNMEDEIIEHWQK.

This sequence belongs to the conotoxin D superfamily. Contains 5 disulfide bonds. As to expression, expressed by the venom duct.

It is found in the secreted. In terms of biological role, probable neurotoxin. The sequence is that of Conotoxin Im28.1 from Conus imperialis (Imperial cone).